Consider the following 398-residue polypeptide: 1-deoxy-D-xylulose 5-phosphate reductoisomerase (398 aa).

Residues Thr-11, Gly-12, Ser-13, Ile-14, and Asn-125 each coordinate NADPH. 1-deoxy-D-xylulose 5-phosphate is bound at residue Lys-126. Glu-127 provides a ligand contact to NADPH. Position 151 (Asp-151) interacts with Mn(2+). 1-deoxy-D-xylulose 5-phosphate-binding residues include Ser-152, Glu-153, Ser-186, and His-209. Glu-153 lines the Mn(2+) pocket. Gly-215 is an NADPH binding site. Residues Ser-222, Asn-227, Lys-228, and Glu-231 each contribute to the 1-deoxy-D-xylulose 5-phosphate site. Mn(2+) is bound at residue Glu-231.

Belongs to the DXR family. It depends on Mg(2+) as a cofactor. Mn(2+) serves as cofactor.

It carries out the reaction 2-C-methyl-D-erythritol 4-phosphate + NADP(+) = 1-deoxy-D-xylulose 5-phosphate + NADPH + H(+). It participates in isoprenoid biosynthesis; isopentenyl diphosphate biosynthesis via DXP pathway; isopentenyl diphosphate from 1-deoxy-D-xylulose 5-phosphate: step 1/6. In terms of biological role, catalyzes the NADPH-dependent rearrangement and reduction of 1-deoxy-D-xylulose-5-phosphate (DXP) to 2-C-methyl-D-erythritol 4-phosphate (MEP). This Acinetobacter baumannii (strain ACICU) protein is 1-deoxy-D-xylulose 5-phosphate reductoisomerase.